The sequence spans 211 residues: Riboflavin kinase (211 aa).

Positions 1 to 85 (MKKILMLIEL…CDKISNALSK (85 aa)) are H-T-H motif-like. Residues 86–211 (GVIVGEVVSG…GDRVRLEVIQ (126 aa)) form a riboflavin kinase region. 95–100 (GLGEGA) is a binding site for CDP. Residues Thr122 and Asn124 each contribute to the Mg(2+) site. 2 residues coordinate FMN: Thr178 and Glu186. 191-194 (VNLR) is a binding site for CDP.

It belongs to the archaeal riboflavin kinase family. Requires Mg(2+) as cofactor.

The enzyme catalyses riboflavin + CTP = CDP + FMN + H(+). Its pathway is cofactor biosynthesis; FMN biosynthesis; FMN from riboflavin (CTP route): step 1/1. Its function is as follows. Catalyzes the CTP-dependent phosphorylation of riboflavin (vitamin B2) to form flavin mononucleotide (FMN). The protein is Riboflavin kinase (ribK) of Thermococcus kodakarensis (strain ATCC BAA-918 / JCM 12380 / KOD1) (Pyrococcus kodakaraensis (strain KOD1)).